The chain runs to 647 residues: MGKIIGIDLGTTNSCVAILEGNTPKVIENSEGARTTPSIIAYMEDGEILVGAPAKRQAVTNPRNTLYAVKRLIGRKFEEKEVQKDIGLMPYSIVKADNGDAWVSVRDQKLAPPQVSAEVLRKMKKTAEDYLGEPVTEAVITVPAYFNDSQRQATKDAGRIAGLDVKRIINEPTAAALAFGLDKNEKGDRKIAVYDLGGGTFDISIIEIADVDGEKQFEVLSTNGDTFLGGEDFDQRIIDYIIGEFKKDQGVDLSKDVLALQRLKEAAEKAKIELSSSQQTEINLPYITADASGPKHLNLKMTRAKLESLVEELITRTIEPCRTAIKDAGVKVSDIDDVILVGGMTRMPKVQEQVKEFFGKEARKDVNPDEAVAVGAAIQGSVLSGDRKDVLLLDVTPLSLGIETLGGVMTKMITKNTTIPTKHAQVFSTADDNQPAVTIKVYQGEREMATGNKLLGEFNLEGIPPAPRGTPQIEVSFDIDANGILHVGAKDKATGKENRITIKANSGLSEDEIQRMVKDAEANAEEDKKARELADARNQADALIHSTRKAVTEYGDKLEAGEKEKIEAAIKELEDAARGGDKTEIDAKVNALSEASQKLGEKVYADMQAKAGEQGAAGAAGAGAQQQAQPQDDNVVDAEFKEVNDKK.

The residue at position 200 (T200) is a Phosphothreonine; by autocatalysis. Residues 611–631 (AGEQGAAGAAGAGAQQQAQPQ) are compositionally biased toward low complexity. Residues 611–647 (AGEQGAAGAAGAGAQQQAQPQDDNVVDAEFKEVNDKK) are disordered. Over residues 638–647 (AEFKEVNDKK) the composition is skewed to basic and acidic residues.

This sequence belongs to the heat shock protein 70 family.

Functionally, acts as a chaperone. This Cupriavidus taiwanensis (strain DSM 17343 / BCRC 17206 / CCUG 44338 / CIP 107171 / LMG 19424 / R1) (Ralstonia taiwanensis (strain LMG 19424)) protein is Chaperone protein DnaK.